A 384-amino-acid chain; its full sequence is 1-deoxy-D-xylulose 5-phosphate reductoisomerase (384 aa).

The NADPH site is built by Thr10, Gly11, Ser12, Ile13, Gly36, Lys37, Asn38, and Asn121. Lys122 is a 1-deoxy-D-xylulose 5-phosphate binding site. Residue Glu123 coordinates NADPH. Position 147 (Asp147) interacts with Mn(2+). 1-deoxy-D-xylulose 5-phosphate contacts are provided by Ser148, Glu149, Ser173, and His196. A Mn(2+)-binding site is contributed by Glu149. An NADPH-binding site is contributed by Gly202. 1-deoxy-D-xylulose 5-phosphate contacts are provided by Ser209, Asn214, Lys215, and Glu218. Glu218 contributes to the Mn(2+) binding site.

The protein belongs to the DXR family. Requires Mg(2+) as cofactor. The cofactor is Mn(2+).

The catalysed reaction is 2-C-methyl-D-erythritol 4-phosphate + NADP(+) = 1-deoxy-D-xylulose 5-phosphate + NADPH + H(+). Its pathway is isoprenoid biosynthesis; isopentenyl diphosphate biosynthesis via DXP pathway; isopentenyl diphosphate from 1-deoxy-D-xylulose 5-phosphate: step 1/6. Functionally, catalyzes the NADPH-dependent rearrangement and reduction of 1-deoxy-D-xylulose-5-phosphate (DXP) to 2-C-methyl-D-erythritol 4-phosphate (MEP). This chain is 1-deoxy-D-xylulose 5-phosphate reductoisomerase, found in Exiguobacterium sibiricum (strain DSM 17290 / CCUG 55495 / CIP 109462 / JCM 13490 / 255-15).